Reading from the N-terminus, the 211-residue chain is Small ribosomal subunit protein bS6c alpha (211 aa).

Over residues 1 to 19 the composition is skewed to low complexity; that stretch reads MATFSLTSTLPSSSPTTSL. Disordered stretches follow at residues 1-25 and 80-100; these read MATF…IPKP and DEDP…PEPQ. The transit peptide at 1–65 directs the protein to the chloroplast; that stretch reads MATFSLTSTL…YGPYVKAIAL (65 aa).

It belongs to the bacterial ribosomal protein bS6 family. As to quaternary structure, component of the chloroplast small ribosomal subunit (SSU). Mature 70S chloroplast ribosomes of higher plants consist of a small (30S) and a large (50S) subunit. The 30S small subunit contains 1 molecule of ribosomal RNA (16S rRNA) and 24 different proteins. The 50S large subunit contains 3 rRNA molecules (23S, 5S and 4.5S rRNA) and 33 different proteins.

The protein localises to the plastid. It localises to the chloroplast. Functionally, component of the chloroplast ribosome (chloro-ribosome), a dedicated translation machinery responsible for the synthesis of chloroplast genome-encoded proteins, including proteins of the transcription and translation machinery and components of the photosynthetic apparatus. The polypeptide is Small ribosomal subunit protein bS6c alpha (RPS6) (Spinacia oleracea (Spinach)).